A 410-amino-acid polypeptide reads, in one-letter code: Chaperonin GroEL (410 aa).

ATP-binding positions include 29-32 (TAGP), Lys50, and 86-90 (DGTTT).

Belongs to the chaperonin (HSP60) family. In terms of assembly, forms a cylinder of 14 subunits composed of two heptameric rings stacked back-to-back. Interacts with the co-chaperonin GroES.

It is found in the cytoplasm. It catalyses the reaction ATP + H2O + a folded polypeptide = ADP + phosphate + an unfolded polypeptide.. Its function is as follows. Together with its co-chaperonin GroES, plays an essential role in assisting protein folding. The GroEL-GroES system forms a nano-cage that allows encapsulation of the non-native substrate proteins and provides a physical environment optimized to promote and accelerate protein folding. In Ehrlichia canis, this protein is Chaperonin GroEL.